A 454-amino-acid chain; its full sequence is MSTTDTIVAQATPPGRGGVGILRVSGRAASEVAHAVLGKLPKPRYADYLPFKDVDGSTLDQGIALYFPGPNSFTGEDVLELQGHGGPVILDLLLKRILALPGLRIARPGEFSERAFLNDKLDLAQAEAIADLIDASSEQAARSAVNSLQGAFSARIHQLVEALTHLRIYVEAAIDFPDEEIDFLSDGKIEGQLNGVMADLEQVRTEARQGSLLREGMKVVIAGRPNAGKSSLLNALAGREAAIVTDIAGTTRDVLREHIHIDGMPLHIIDTAGLREANDEVERIGIERAWNEIEQADRVLFMVDGTTTDATEPAAIWPEFMARLPATLPITVVRNKADITGETLGLTEVNGHSLIRLSARTGEGIDLLRDHLKQSMGFTSNTEGGFLARRRHLQALETAARHLIQGHEQLVSAYAGELLAEELRLAQQSLSEITGEFSSDDLLGRIFSSFCIGK.

3 residues coordinate (6S)-5-formyl-5,6,7,8-tetrahydrofolate: arginine 23, glutamate 80, and lysine 120. A TrmE-type G domain is found at 216-377 (GMKVVIAGRP…LRDHLKQSMG (162 aa)). K(+) is bound at residue asparagine 226. GTP-binding positions include 226 to 231 (NAGKSS), 245 to 251 (TDIAGTT), 270 to 273 (DTAG), 335 to 338 (NKAD), and 358 to 360 (SAR). Serine 230 lines the Mg(2+) pocket. K(+)-binding residues include threonine 245, isoleucine 247, and threonine 250. Threonine 251 serves as a coordination point for Mg(2+). Residue lysine 454 coordinates (6S)-5-formyl-5,6,7,8-tetrahydrofolate.

It belongs to the TRAFAC class TrmE-Era-EngA-EngB-Septin-like GTPase superfamily. TrmE GTPase family. As to quaternary structure, homodimer. Heterotetramer of two MnmE and two MnmG subunits. K(+) serves as cofactor.

The protein resides in the cytoplasm. Functionally, exhibits a very high intrinsic GTPase hydrolysis rate. Involved in the addition of a carboxymethylaminomethyl (cmnm) group at the wobble position (U34) of certain tRNAs, forming tRNA-cmnm(5)s(2)U34. The protein is tRNA modification GTPase MnmE of Yersinia pseudotuberculosis serotype O:3 (strain YPIII).